A 265-amino-acid polypeptide reads, in one-letter code: Arcelin-1 (265 aa).

Residues 1–21 (MASSNLLTLALFLVLLTHANS) form the signal peptide. Residues Asn-33, Asn-89, and Asn-128 are each glycosylated (N-linked (GlcNAc...) asparagine). A disulfide bridge connects residues Cys-165 and Cys-201.

Belongs to the leguminous lectin family. Homodimer.

In terms of biological role, seed storage. This carbohydrate-binding lectin has toxic effects on an important bean bruchid pest, Z.subfasciatus. Antibiosis properties of legume lectins are proposed to be due to the lysis of epithelial cells of the intestine by binding to the carbohydrate moieties of these proteins. This Phaseolus vulgaris (Kidney bean) protein is Arcelin-1 (ARC1).